The following is a 256-amino-acid chain: Leucine-rich repeat-containing protein 18 (256 aa).

LRR repeat units lie at residues 28 to 49 (GRKR…ILRL), 51 to 72 (EIDE…ISKF), 74 to 95 (NLRW…IGQM), 97 to 118 (SLLF…VELN), 122 to 144 (NIRT…GALK), 145 to 167 (ELHE…SKLP), 168 to 189 (KLKK…DMFV), and 194 to 215 (RLEN…QKCQ).

Its subcellular location is the cytoplasm. Functionally, may be involved in the regulation of spermatogenesis and sperm maturation. This chain is Leucine-rich repeat-containing protein 18 (Lrrc18), found in Rattus norvegicus (Rat).